The following is a 254-amino-acid chain: 3-deoxy-manno-octulosonate cytidylyltransferase (254 aa).

This sequence belongs to the KdsB family.

The protein resides in the cytoplasm. The catalysed reaction is 3-deoxy-alpha-D-manno-oct-2-ulosonate + CTP = CMP-3-deoxy-beta-D-manno-octulosonate + diphosphate. Its pathway is nucleotide-sugar biosynthesis; CMP-3-deoxy-D-manno-octulosonate biosynthesis; CMP-3-deoxy-D-manno-octulosonate from 3-deoxy-D-manno-octulosonate and CTP: step 1/1. The protein operates within bacterial outer membrane biogenesis; lipopolysaccharide biosynthesis. Its function is as follows. Activates KDO (a required 8-carbon sugar) for incorporation into bacterial lipopolysaccharide in Gram-negative bacteria. This chain is 3-deoxy-manno-octulosonate cytidylyltransferase, found in Bordetella parapertussis (strain 12822 / ATCC BAA-587 / NCTC 13253).